The primary structure comprises 247 residues: Ubiquinone biosynthesis O-methyltransferase (247 aa).

Arg39, Gly70, Asp91, and Met134 together coordinate S-adenosyl-L-methionine.

This sequence belongs to the methyltransferase superfamily. UbiG/COQ3 family.

The catalysed reaction is a 3-demethylubiquinol + S-adenosyl-L-methionine = a ubiquinol + S-adenosyl-L-homocysteine + H(+). The enzyme catalyses a 3-(all-trans-polyprenyl)benzene-1,2-diol + S-adenosyl-L-methionine = a 2-methoxy-6-(all-trans-polyprenyl)phenol + S-adenosyl-L-homocysteine + H(+). Its pathway is cofactor biosynthesis; ubiquinone biosynthesis. In terms of biological role, O-methyltransferase that catalyzes the 2 O-methylation steps in the ubiquinone biosynthetic pathway. The chain is Ubiquinone biosynthesis O-methyltransferase from Cereibacter sphaeroides (strain KD131 / KCTC 12085) (Rhodobacter sphaeroides).